The sequence spans 378 residues: Quinolinate synthase (378 aa).

Iminosuccinate-binding residues include H59 and S80. C125 contributes to the [4Fe-4S] cluster binding site. Iminosuccinate contacts are provided by residues 151–153 (YAN) and S168. C212 is a [4Fe-4S] cluster binding site. Residues 238–240 (HPE) and T255 contribute to the iminosuccinate site. C309 is a binding site for [4Fe-4S] cluster.

The protein belongs to the quinolinate synthase family. Type 1 subfamily. The cofactor is [4Fe-4S] cluster.

It is found in the cytoplasm. It catalyses the reaction iminosuccinate + dihydroxyacetone phosphate = quinolinate + phosphate + 2 H2O + H(+). The protein operates within cofactor biosynthesis; NAD(+) biosynthesis; quinolinate from iminoaspartate: step 1/1. Its function is as follows. Catalyzes the condensation of iminoaspartate with dihydroxyacetone phosphate to form quinolinate. The chain is Quinolinate synthase from Burkholderia mallei (strain NCTC 10247).